Reading from the N-terminus, the 377-residue chain is MKTFSDRWRQLDWDDIRLRINGKTAADVERALNASQLTRDDMMALLSPAASGYLEQLAQRAQRLTRQRFGNTVSFYVPLYLSNLCANDCTYCGFSMSNRIKRKTLDEADIARESAAIREMGFEHLLLVTGEHQAKVGMDYFRRHLPALREQFSSLQMEVQPLAETEYAELKQLGLDGVMVYQETYHEATYARHHLKGKKQDFFWRLETPDRLGRAGIDKIGLGALIGLSDNWRVDSYMVAEHLLWLQQHYWQSRYSVSFPRLRPCTGGIEPASIMDERQLVQTICAFRLLAPEIELSLSTRESPWFRDRVIPLAINNVSAFSKTQPGGYADNHPELEQFSPHDDRRPEAVAAALTAQGLQPVWKDWDSYLGRASQRL.

In terms of domain architecture, Radical SAM core spans 71–301 (NTVSFYVPLY…PEIELSLSTR (231 aa)). [4Fe-4S] cluster-binding residues include Cys85, Cys89, and Cys92.

It belongs to the radical SAM superfamily. ThiH family. As to quaternary structure, forms a heterodimer with ThiG. [4Fe-4S] cluster is required as a cofactor.

It catalyses the reaction L-tyrosine + S-adenosyl-L-methionine + NADPH = 2-iminoacetate + 4-methylphenol + 5'-deoxyadenosine + L-methionine + NADP(+). Its pathway is cofactor biosynthesis; thiamine diphosphate biosynthesis. Catalyzes the radical-mediated cleavage of tyrosine to 2-iminoacetate and 4-cresol. The polypeptide is 2-iminoacetate synthase (thiH) (Escherichia coli (strain K12)).